The sequence spans 557 residues: Laccase-11 (557 aa).

A signal peptide spans 1–23 (MKMGFLFLFCYLLAFLGYSPVDA). Plastocyanin-like domains lie at 31–147 (DVQV…PAPG) and 158–308 (ESNI…YKGV). Residues N36, N69, and N77 are each glycosylated (N-linked (GlcNAc...) asparagine). Positions 81 and 83 each coordinate Cu cation. N-linked (GlcNAc...) asparagine glycosylation is present at N115. 2 residues coordinate Cu cation: H126 and H128. 8 N-linked (GlcNAc...) asparagine glycosylation sites follow: N240, N296, N323, N371, N381, N398, N416, and N440. In terms of domain architecture, Plastocyanin-like 3 spans 406-541 (DFPDRPPKAF…KMAFVVENGE (136 aa)). Residues H458, H461, H463, H520, C521, H522, and H526 each coordinate Cu cation.

This sequence belongs to the multicopper oxidase family. The cofactor is Cu cation. In terms of tissue distribution, ubiquitous and constitutive.

It is found in the secreted. It localises to the extracellular space. The protein resides in the apoplast. It catalyses the reaction 4 hydroquinone + O2 = 4 benzosemiquinone + 2 H2O. Functionally, lignin degradation and detoxification of lignin-derived products. This chain is Laccase-11 (LAC11), found in Arabidopsis thaliana (Mouse-ear cress).